Consider the following 343-residue polypeptide: MHKIVWFGTLNKSIGYIGKKKTCLLSPCEKICLNSARKTVQRCDKNYSPPKLRRIKNFYTYSVVLGSLFSIVMWAIYKLGKPEEDHRGPIEDEFSQLPWFRQYIMRMWHTLQYYEKMMEEPQMARLLPNVVPPPYIQPPYSLVLEIKDVLVHPDWTYQTGWRFKKRPGVDYFLQQCSRNFEIVIYTSEQGMTAFPLLDALDPYGYIKYRLVRGATDLVEGQHTKNLDYLNRDLSRVIVVDCDPYTTPLHPDNSLVLTKWLGNDDDVQLFDLTAFLQLIAEHQVNDVREVLRYYRQFEDPMEQFKDNQRRLQEQSQESIQNLPTSERQWNLTLLGRSLRGSSIK.

The Mitochondrial matrix portion of the chain corresponds to 1 to 57; that stretch reads MHKIVWFGTLNKSIGYIGKKKTCLLSPCEKICLNSARKTVQRCDKNYSPPKLRRIKN. The helical transmembrane segment at 58-77 threads the bilayer; the sequence is FYTYSVVLGSLFSIVMWAIY. Residues 78–343 lie on the Mitochondrial intermembrane side of the membrane; sequence KLGKPEEDHR…GRSLRGSSIK (266 aa). One can recognise an FCP1 homology domain in the interval 135 to 278; that stretch reads YIQPPYSLVL…FDLTAFLQLI (144 aa).

The protein belongs to the TIM50 family. As to quaternary structure, component of the TIM23 complex at least composed of Tim23, Tim17 (Tim17a1, Tim17a2 or Tim17b1) and a Tim50. Exclusively expressed in the testis.

The protein localises to the mitochondrion inner membrane. Its function is as follows. Essential component of the TIM23 complex, a complex that mediates the translocation of transit peptide-containing proteins across the mitochondrial inner membrane. This chain is Mitochondrial import inner membrane translocase subunit TIM50-A (ttm3), found in Drosophila melanogaster (Fruit fly).